Consider the following 331-residue polypeptide: Geranylgeranyl transferase type-2 subunit beta (331 aa).

Position 2 is an N-acetylglycine (G2). T3 carries the phosphothreonine modification. PFTB repeat units follow at residues 20 to 61 (LEKH…DLMG), 68 to 109 (REEI…TLYD), 116 to 157 (VNKV…ALLG), 164 to 205 (VEKA…AITS), 212 to 253 (SDLL…KIIG), and 260 to 302 (REKL…SLLG). Residue 190-192 (HAG) coordinates geranylgeranyl diphosphate. Zn(2+) contacts are provided by D238 and C240. 241-244 (YSWW) contacts geranylgeranyl diphosphate. Zn(2+) is bound at residue H290.

The protein belongs to the protein prenyltransferase subunit beta family. As to quaternary structure, heterotrimer composed of RABGGTA, RABGGTB and CHM; within this trimer, RABGGTA and RABGGTB form the catalytic component B, while CHM (component A) mediates peptide substrate binding. The Rab GGTase dimer (RGGT) interacts with CHM (component A) prior to Rab protein binding; the association is stabilized by geranylgeranyl pyrophosphate (GGpp). The CHM:RGGT:Rab complex is destabilized by GGpp. Interaction of RABGGTB with prenylated PTP4A2 precludes its association with RABGGTA and inhibits enzyme activity. Interacts with CHODL. Interacts with non-phosphorylated form of RAB8A; phosphorylation of RAB8A at 'Thr-72' disrupts this interaction. The cofactor is Zn(2+).

It catalyses the reaction geranylgeranyl diphosphate + L-cysteinyl-[protein] = S-geranylgeranyl-L-cysteinyl-[protein] + diphosphate. Its activity is regulated as follows. The enzymatic reaction requires the aid of a Rab escort protein (also called component A). In terms of biological role, catalyzes the transfer of a geranylgeranyl moiety from geranylgeranyl diphosphate to both cysteines of Rab proteins with the C-terminal sequence -XXCC, -XCXC and -CCXX, such as RAB1A, RAB3A, RAB5A and RAB7A. In Homo sapiens (Human), this protein is Geranylgeranyl transferase type-2 subunit beta (RABGGTB).